The following is a 542-amino-acid chain: Protein lin-9 homolog (542 aa).

N-acetylalanine is present on Ala2. The interval 2–296 is sufficient for interaction with RB1; the sequence is AELDQLPDES…QKQRPSRFFM (295 aa). Residue Lys21 forms a Glycyl lysine isopeptide (Lys-Gly) (interchain with G-Cter in SUMO2) linkage. Phosphoserine is present on residues Ser65 and Ser95. Phosphothreonine occurs at positions 96 and 304. Residues Ser309 and Ser321 each carry the phosphoserine modification. Residues 354–413 are a coiled coil; sequence MIKKEHIKKLREMNTEAEKLKSYSMPISIEFQRRYATIVLELEQLNKDLNKVLHKVQQYC.

Belongs to the lin-9 family. In terms of assembly, component of the DREAM complex (also named LINC complex) at least composed of E2F4, E2F5, LIN9, LIN37, LIN52, LIN54, MYBL1, MYBL2, RBL1, RBL2, RBBP4, TFDP1 and TFDP2. The complex exists in quiescent cells where it represses cell cycle-dependent genes. It dissociates in S phase when LIN9, LIN37, LIN52 and LIN54 form a subcomplex that binds to MYBL2. Interacts with RB1. In terms of tissue distribution, expressed in thymus and testis.

The protein resides in the nucleus. Its subcellular location is the nucleoplasm. Acts as a tumor suppressor. Inhibits DNA synthesis. Its ability to inhibit oncogenic transformation is mediated through its association with RB1. Plays a role in the expression of genes required for the G1/S transition. The polypeptide is Protein lin-9 homolog (LIN9) (Homo sapiens (Human)).